We begin with the raw amino-acid sequence, 1059 residues long: Eukaryotic translation initiation factor 3 subunit A (1059 aa).

A coiled-coil region spans residues 99 to 130; it reads AAEKVTAAQAKADEVQSSIEATTSNIDDLEAS. The PCI domain occupies 337–521; sequence LQRAATFVIL…GVLSFDADVF (185 aa). Residues 586–905 are a coiled coil; it reads EALARAKAGA…KAEKEKLAAT (320 aa). Residues 794–902 are compositionally biased toward basic and acidic residues; that stretch reads RRDEFEKRRR…ARRKAEKEKL (109 aa). The disordered stretch occupies residues 794–1059; that stretch reads RRDEFEKRRR…YVPKWRREGA (266 aa). Composition is skewed to low complexity over residues 908–927, 942–958, 965–988, and 1005–1024; these read AYRP…PRIA, KAAS…AAEP, AAAP…GNRP, and AAAV…PQRA.

This sequence belongs to the eIF-3 subunit A family. As to quaternary structure, component of the eukaryotic translation initiation factor 3 (eIF-3) complex.

Its subcellular location is the cytoplasm. Its function is as follows. RNA-binding component of the eukaryotic translation initiation factor 3 (eIF-3) complex, which is involved in protein synthesis of a specialized repertoire of mRNAs and, together with other initiation factors, stimulates binding of mRNA and methionyl-tRNAi to the 40S ribosome. The eIF-3 complex specifically targets and initiates translation of a subset of mRNAs involved in cell proliferation. The polypeptide is Eukaryotic translation initiation factor 3 subunit A (eif3a) (Neurospora crassa (strain ATCC 24698 / 74-OR23-1A / CBS 708.71 / DSM 1257 / FGSC 987)).